The sequence spans 538 residues: Bifunctional purine biosynthesis protein PurH (538 aa).

Positions 8 to 158 constitute an MGS-like domain; the sequence is FPIPDLHRVR…KNHVYTGVIT (151 aa).

This sequence belongs to the PurH family.

The catalysed reaction is (6R)-10-formyltetrahydrofolate + 5-amino-1-(5-phospho-beta-D-ribosyl)imidazole-4-carboxamide = 5-formamido-1-(5-phospho-D-ribosyl)imidazole-4-carboxamide + (6S)-5,6,7,8-tetrahydrofolate. It catalyses the reaction IMP + H2O = 5-formamido-1-(5-phospho-D-ribosyl)imidazole-4-carboxamide. Its pathway is purine metabolism; IMP biosynthesis via de novo pathway; 5-formamido-1-(5-phospho-D-ribosyl)imidazole-4-carboxamide from 5-amino-1-(5-phospho-D-ribosyl)imidazole-4-carboxamide (10-formyl THF route): step 1/1. It participates in purine metabolism; IMP biosynthesis via de novo pathway; IMP from 5-formamido-1-(5-phospho-D-ribosyl)imidazole-4-carboxamide: step 1/1. The chain is Bifunctional purine biosynthesis protein PurH from Bartonella henselae (strain ATCC 49882 / DSM 28221 / CCUG 30454 / Houston 1) (Rochalimaea henselae).